The following is a 264-amino-acid chain: Cell division protein DivIB (264 aa).

Residues 1-23 (MAVYEERIPQVKQQRPRRRGNRK) are Cytoplasmic-facing. A helical transmembrane segment spans residues 24–44 (LVFLLVLFFLTILIIVFIRSP). Residues 45–264 (YSKVQEIRVT…GQEQPQQPQQ (220 aa)) are Extracellular-facing. The POTRA domain maps to 46–114 (SKVQEIRVTG…GLITLHITEQ (69 aa)).

This sequence belongs to the FtsQ/DivIB family. DivIB subfamily.

The protein resides in the cell membrane. Its function is as follows. Cell division protein that may be involved in stabilizing or promoting the assembly of the division complex. This is Cell division protein DivIB from Brevibacillus brevis (strain 47 / JCM 6285 / NBRC 100599).